A 413-amino-acid polypeptide reads, in one-letter code: Probable aminotransferase sirI (413 aa).

Residue Lys255 is modified to N6-(pyridoxal phosphate)lysine.

The protein belongs to the class-I pyridoxal-phosphate-dependent aminotransferase family. Pyridoxal 5'-phosphate serves as cofactor.

Its pathway is mycotoxin biosynthesis. Functionally, probable aminotransferase; part of the gene cluster that mediates the biosynthesis of sirodesmin PL, an epipolythiodioxopiperazine (ETP) characterized by a disulfide bridged cyclic dipeptide and that acts as a phytotoxin which is involved in the blackleg didease of canola. SirD catalyzes the O-prenylation of L-tyrosine (L-Tyr) in the presence of dimethylallyl diphosphate (DMAPP) to yield 4-O-dimethylallyl-L-Tyr, and therefore represents probably the first pathway-specific enzyme in the biosynthesis of sirodesmin PL. 4-O-dimethylallyl-L-Tyr, then undergoes condensation with L-Ser in a reaction catalyzed by the non-ribosomal peptide synthase sirP to form the diketopiperazine (DKP) backbone. Further bishydroxylation of the DKP performed by the cytochrome P450 monooxygenase sirC leads to the production of the intermediate phomamide. This step is essential to form the reactive thiol group required for toxicity of sirodesmin PL. The next steps of sirodesmin biosynthesis are not well understood yet, but some predictions could be made from intermediate compounds identification. Phomamide is converted into phomalizarine via oxidation, probably by sirT. Further oxidation, methylation (by sirM or sirN) and reduction steps convert phomalizarine to deacetyl sirodesmin. Finally, acetyltransferase sirH probably acetylates deacetyl sirodesmin to produce sirodesmin PL. The polypeptide is Probable aminotransferase sirI (Leptosphaeria maculans (Blackleg fungus)).